The sequence spans 287 residues: Bifunctional protein FolD (287 aa).

Residues 164 to 166 (GSS), S189, and I230 contribute to the NADP(+) site.

It belongs to the tetrahydrofolate dehydrogenase/cyclohydrolase family. In terms of assembly, homodimer.

The enzyme catalyses (6R)-5,10-methylene-5,6,7,8-tetrahydrofolate + NADP(+) = (6R)-5,10-methenyltetrahydrofolate + NADPH. It carries out the reaction (6R)-5,10-methenyltetrahydrofolate + H2O = (6R)-10-formyltetrahydrofolate + H(+). The protein operates within one-carbon metabolism; tetrahydrofolate interconversion. In terms of biological role, catalyzes the oxidation of 5,10-methylenetetrahydrofolate to 5,10-methenyltetrahydrofolate and then the hydrolysis of 5,10-methenyltetrahydrofolate to 10-formyltetrahydrofolate. In Aliarcobacter butzleri (strain RM4018) (Arcobacter butzleri), this protein is Bifunctional protein FolD.